Consider the following 89-residue polypeptide: Large ribosomal subunit protein bL31B (89 aa).

The protein belongs to the bacterial ribosomal protein bL31 family. Type B subfamily. In terms of assembly, part of the 50S ribosomal subunit.

The chain is Large ribosomal subunit protein bL31B from Actinobacillus pleuropneumoniae serotype 5b (strain L20).